An 81-amino-acid polypeptide reads, in one-letter code: Small ribosomal subunit protein bS16 (81 aa).

Belongs to the bacterial ribosomal protein bS16 family.

The polypeptide is Small ribosomal subunit protein bS16 (Lachnoclostridium phytofermentans (strain ATCC 700394 / DSM 18823 / ISDg) (Clostridium phytofermentans)).